Reading from the N-terminus, the 570-residue chain is Grayanic acid biosynthesis cluster cytochrome P450 monooxygenase (570 aa).

A helical transmembrane segment spans residues 9 to 29; it reads ILTIFWLPIAAAXLYGAGLAI. A glycan (N-linked (GlcNAc...) asparagine) is linked at asparagine 191. Position 510 (cysteine 510) interacts with heme.

Belongs to the cytochrome P450 family. Requires heme as cofactor.

The protein resides in the membrane. It functions in the pathway secondary metabolite biosynthesis. Functionally, non-reducing polyketide synthase; part of the gene cluster that mediates the biosynthesis of orcinol depsidone grayanic acid (GRA), the only major secondary metabolite known in C.grayi. The first step consists in the ring and depside synthesis by PKS16 leading to 4-O-demethylsphaerophorin, involving different orcinol-like rings, one with acetyl CoA and the other with octanoyl CoA as the starter. Further depsidone formation by the GRA cluster-specific cytochrome P450 leads to 4-O-demethylgrayanic acid. Finally, the cluster specific O-methyltransferase probably converts the 4-O-demethylgrayanic acid into grayanic acid. The polypeptide is Grayanic acid biosynthesis cluster cytochrome P450 monooxygenase (Cladonia grayi (Gray's cup lichen)).